We begin with the raw amino-acid sequence, 308 residues long: Homoserine O-acetyltransferase (308 aa).

The active-site Acyl-thioester intermediate is the Cys-142. Substrate is bound by residues Lys-163 and Ser-192. Catalysis depends on His-235, which acts as the Proton acceptor. Glu-237 is a catalytic residue. Arg-249 serves as a coordination point for substrate.

The protein belongs to the MetA family.

The protein localises to the cytoplasm. The catalysed reaction is L-homoserine + acetyl-CoA = O-acetyl-L-homoserine + CoA. Its pathway is amino-acid biosynthesis; L-methionine biosynthesis via de novo pathway; O-acetyl-L-homoserine from L-homoserine: step 1/1. Its function is as follows. Transfers an acetyl group from acetyl-CoA to L-homoserine, forming acetyl-L-homoserine. The sequence is that of Homoserine O-acetyltransferase from Rhizobium rhizogenes (strain K84 / ATCC BAA-868) (Agrobacterium radiobacter).